Here is a 247-residue protein sequence, read N- to C-terminus: MDVKLLEATDDPEDLICKAARNDYSDTSVGSQSFEATMAEVDGDSLEEKKETLIGHLLDHGHFGPFEHAQATFAVEGVSRSCMAQITRHRHVSFDVQSMRYVSFDDVDPEAVREGELVVTPPSATDPDWIGRNQQKASVSDEEFEERAEIFKDTIEQAVESYQELLELGMPPEDARFVLPIGTKVNIVMSMNARMLMHVADMRAAADAQWEIREMTEEMLELAADWCPKTFEYYEQEMKGRKNRLAP.

Residues 1-237 form the ThyX domain; that stretch reads MDVKLLEATD…PKTFEYYEQE (237 aa). DUMP contacts are provided by residues 85–88, 98–100, and Arg-176; these read QITR and SMR. 88-90 is a binding site for FAD; it reads RHR. A ThyX motif motif is present at residues 88–98; that stretch reads RHRHVSFDVQS. Residues 192–194 and His-198 contribute to the FAD site; that span reads NAR. Residue Arg-203 participates in dUMP binding. The Involved in ionization of N3 of dUMP, leading to its activation role is filled by Arg-203.

The protein belongs to the thymidylate synthase ThyX family. As to quaternary structure, homotetramer. Requires FAD as cofactor.

The enzyme catalyses dUMP + (6R)-5,10-methylene-5,6,7,8-tetrahydrofolate + NADPH + H(+) = dTMP + (6S)-5,6,7,8-tetrahydrofolate + NADP(+). It functions in the pathway pyrimidine metabolism; dTTP biosynthesis. In terms of biological role, catalyzes the reductive methylation of 2'-deoxyuridine-5'-monophosphate (dUMP) to 2'-deoxythymidine-5'-monophosphate (dTMP) while utilizing 5,10-methylenetetrahydrofolate (mTHF) as the methyl donor, and NADPH and FADH(2) as the reductant. This is Flavin-dependent thymidylate synthase from Haloarcula marismortui (strain ATCC 43049 / DSM 3752 / JCM 8966 / VKM B-1809) (Halobacterium marismortui).